A 129-amino-acid polypeptide reads, in one-letter code: Small ribosomal subunit protein uS12 (129 aa).

Residues 110–129 form a disordered region; it reads RKQGRSRYGAHRKQVAATKK.

Belongs to the universal ribosomal protein uS12 family. In terms of assembly, part of the 30S ribosomal subunit. Contacts proteins S8 and S17. May interact with IF1 in the 30S initiation complex.

In terms of biological role, with S4 and S5 plays an important role in translational accuracy. Its function is as follows. Interacts with and stabilizes bases of the 16S rRNA that are involved in tRNA selection in the A site and with the mRNA backbone. Located at the interface of the 30S and 50S subunits, it traverses the body of the 30S subunit contacting proteins on the other side and probably holding the rRNA structure together. The combined cluster of proteins S8, S12 and S17 appears to hold together the shoulder and platform of the 30S subunit. The chain is Small ribosomal subunit protein uS12 from Rickettsia prowazekii (strain Madrid E).